The sequence spans 408 residues: Secreted mono- and diacylglycerol lipase 2 (408 aa).

The first 24 residues, 1–24 (MRFKLADSLSLITVQLILATSTLA), serve as a signal peptide directing secretion. Asn177 carries an N-linked (GlcNAc...) asparagine glycan. The Nucleophile role is filled by Ser217. Catalysis depends on residues Asp283 and His374.

The protein belongs to the AB hydrolase superfamily. Lipase family. Class 3 subfamily.

It localises to the secreted. The catalysed reaction is a monoacylglycerol + H2O = glycerol + a fatty acid + H(+). It carries out the reaction a diacylglycerol + H2O = a monoacylglycerol + a fatty acid + H(+). Its function is as follows. Secreted mono- and diacylglycerol lipase involved in plant virulence. Has a substrate preference for p-nitrophenyl esters with a carbon chain length of C10 (p-nitrophenyl caprate). This is Secreted mono- and diacylglycerol lipase 2 from Gibberella zeae (strain ATCC MYA-4620 / CBS 123657 / FGSC 9075 / NRRL 31084 / PH-1) (Wheat head blight fungus).